Consider the following 115-residue polypeptide: ComG operon protein 5 (115 aa).

A propeptide spans M1–G7 (leader sequence). F8 carries the N-methylphenylalanine modification. A helical transmembrane segment spans residues T13–W31.

In terms of processing, processing of ComGE in competent cells requires ComC.

Its subcellular location is the cell membrane. It is found in the cell surface. Functionally, required for transformation and DNA binding. The polypeptide is ComG operon protein 5 (comGE) (Bacillus subtilis (strain 168)).